The sequence spans 500 residues: L-arabinose isomerase (500 aa).

Mn(2+) contacts are provided by Glu-306, Glu-333, His-350, and His-450.

The protein belongs to the arabinose isomerase family. As to quaternary structure, homohexamer. Mn(2+) is required as a cofactor.

The enzyme catalyses beta-L-arabinopyranose = L-ribulose. It functions in the pathway carbohydrate degradation; L-arabinose degradation via L-ribulose; D-xylulose 5-phosphate from L-arabinose (bacterial route): step 1/3. Catalyzes the conversion of L-arabinose to L-ribulose. The chain is L-arabinose isomerase from Yersinia pseudotuberculosis serotype I (strain IP32953).